A 163-amino-acid polypeptide reads, in one-letter code: MSNINLATLDISEHPNLPTSSAVLFKAKDDKKLSFEKIASHVGRNEVATAAIFYGQAKASAEDIVRLAEVLGIDHGQLAFLLGGFPDRGKSVPFPPKDPLIYRLYEIVQNYGYAYKAVMNEKFGDGIMSAISFSTKVEKETDKDGNDWAVVTWRGKWLPYSRF.

Active-site residues include arginine 103, glutamate 106, and serine 129.

This sequence belongs to the cyanase family.

It carries out the reaction cyanate + hydrogencarbonate + 3 H(+) = NH4(+) + 2 CO2. In terms of biological role, catalyzes the reaction of cyanate with bicarbonate to produce ammonia and carbon dioxide. The polypeptide is Cyanate hydratase (Ajellomyces capsulatus (strain H143) (Darling's disease fungus)).